A 184-amino-acid polypeptide reads, in one-letter code: ATP synthase subunit b, chloroplastic (184 aa).

The helical transmembrane segment at 27–49 (LATNPINLSIVIGVLIFFGKGVL) threads the bilayer.

It belongs to the ATPase B chain family. As to quaternary structure, F-type ATPases have 2 components, F(1) - the catalytic core - and F(0) - the membrane proton channel. F(1) has five subunits: alpha(3), beta(3), gamma(1), delta(1), epsilon(1). F(0) has four main subunits: a(1), b(1), b'(1) and c(10-14). The alpha and beta chains form an alternating ring which encloses part of the gamma chain. F(1) is attached to F(0) by a central stalk formed by the gamma and epsilon chains, while a peripheral stalk is formed by the delta, b and b' chains.

It localises to the plastid. It is found in the chloroplast thylakoid membrane. F(1)F(0) ATP synthase produces ATP from ADP in the presence of a proton or sodium gradient. F-type ATPases consist of two structural domains, F(1) containing the extramembraneous catalytic core and F(0) containing the membrane proton channel, linked together by a central stalk and a peripheral stalk. During catalysis, ATP synthesis in the catalytic domain of F(1) is coupled via a rotary mechanism of the central stalk subunits to proton translocation. In terms of biological role, component of the F(0) channel, it forms part of the peripheral stalk, linking F(1) to F(0). This chain is ATP synthase subunit b, chloroplastic, found in Lotus japonicus (Lotus corniculatus var. japonicus).